We begin with the raw amino-acid sequence, 1776 residues long: MHSVSPSTYPSGGTSPAPADTPGTEYSEYEFSNDVAVVGMACRVAGGNHNPELLWQSLLSQKSAVGEIPEMRWEPYYRRDPRNAKELKKTTSRGYFLDRLEDFDCQFFGISPKEAEQMDPQQRVSLEVASEALEDAGIPAKSLSGSDTAVFWGVNSDDYSKLVLEDLPNVEAWMGIGTAYCGVPNRISYHLNLMGPSTAVDAACASSLVAVHHGVQAIRLGESQVAIVGGVNALCGPGLTRVLDKAGAISSDGSCKSFDDDAHGYARGEGAGALVLKSLHRALLDHDNVLAVIKGSAVAQDGKTNGIMAPNAKAQQLAARTALNVAGVDPSTVRYVEAHATSTPLGDPTEISAIAGVYGTNRPADDPCYIGSIKPNIGHLEAGAGVMGFIKAILTIQKGVLPPQANLTNLNSRIDWKTAGVKVVQEATPWPSSDPIRRAGVCSYGYGGTVSHAVIEEFNPILRPDPLDDGAATGPGLLLLSGPQEKRLALQAKTLREWMTADGKDNNLSEILTTLATRRDHHDYRAALVVDDHLDATQVLQALANGTDHSFTTQSRVLGADVSKDVVWVFSGHGAQWPDMGKQLIHNPVFFAAIQPLDELIQAEIGLSPIELLRTGDFESSDRVQILTYLMQIGLSAILQSNGITPQAVIGHSVGEIAASVVAGALTSAEGALIVTRRALLYRQVMGKGGMILVNLPSAETEEILGRRQDLVVAIDSSPSSCVVAGDKDIVAETAEAFKARGVKTFTVKSDIAFHSPTLNVLMDPLRDALGQALAPTVHIKLYSTALVDPRGQDVRDLEYWTGNMVNRVRLTSAIQAAVEDGYRLFLEVSTHPVVSHSINETLMDAGLEDFAVIPTLLRKKPTEKHILHSIAQLHCRGAEVNWAAQMPGRWATGLPTTTWMHKPIWRKIETAPLHTGLTHDVEKHTLLGQRIPVPGTDTFVYTSRLDNETKPFPGSHPLHGTEIVPAAGLINTFLKGTGGQMLQNVVLRVPVAINAPRSVQVVVQQDQVKVVSRLISSDPSLSDDDASWVTHTTAYWDRKVLGSADRIDLAAVKARLTTKLADNFSIDYLDKVGVSAMGFPWAVTEHYRDTKQMLARVDVNPAVLGDDPLPWDSSSWAPVLDAATSVGSTVFQTAALRMPAQIERVEIFTSEDPPKISYLFVEEASDSVPTSHVSVLSETGEVLAKFTAMRFSEIEGTPGVSGSMESLVHQIAWPPATPAEEPLLITKVILVSPDATARAQYAATLPTQVQSFQFSTTEDFFSNASSLPLEKGTVVAYIPGEVASLAEVPAASESFTWNLLELIKFIVNGSLPIKVFTLTSSVGDGQTPTALAQSPLIGLARIIASEHPDLGSLIDIEEPKIPLSTMRYIQGADVIRISDGIARVSRFRSLPRTKLRPASEGPRLLPRPDGTYLITGGLGILGLEVADFLVEKGARRLLLISRRALPPRRTWDQVSEDLQPTIAKIRLLESRGASVHVLPLDITKPDAVEQLSTALDRLSLPAVQGVVHAAGVLDNEMVLQTTRDAFNRVLAPKIAGALALHEVFPPKSVDFFVMFSSCGNLVGFTGQASYGSGNAFLDTLATHRARLGDSGAVAFQWTAWRGLGMGSSTDFINAELEAKGITDVTRDEAFAAWQHLAKYDIDHGVVLRSLAIDDGEPVPVPILNDIVVRRVSELSGSAQAAAGSSGNDAVPSSGPELKAYLDEKIRGCVAKVLQMTAEDVDSKAALADLGVDSVMTVTLRRQLQQTLKIPVPPTLTWSHPTVSHLVVWFAEKIGK.

The segment covering 1–18 (MHSVSPSTYPSGGTSPAP) has biased composition (low complexity). Residues 1–26 (MHSVSPSTYPSGGTSPAPADTPGTEY) form a disordered region. The Ketosynthase family 3 (KS3) domain maps to 32 to 457 (SNDVAVVGMA…GTVSHAVIEE (426 aa)). Catalysis depends on for beta-ketoacyl synthase activity residues cysteine 204, histidine 339, and histidine 379. The tract at residues 567-880 (VWVFSGHGAQ…IAQLHCRGAE (314 aa)) is malonyl-CoA:ACP transacylase (MAT) domain. The segment at 925-1044 (HTLLGQRIPV…AYWDRKVLGS (120 aa)) is N-terminal hotdog fold. The segment at 925–1196 (HTLLGQRIPV…FTAMRFSEIE (272 aa)) is dehydratase (DH) domain. A PKS/mFAS DH domain is found at 925–1201 (HTLLGQRIPV…FSEIEGTPGV (277 aa)). Catalysis depends on histidine 957, which acts as the Proton acceptor; for dehydratase activity. The segment at 1058–1201 (TTKLADNFSI…FSEIEGTPGV (144 aa)) is C-terminal hotdog fold. Aspartate 1113 serves as the catalytic Proton donor; for dehydratase activity. The segment at 1205-1657 (MESLVHQIAW…LRSLAIDDGE (453 aa)) is product template (PT) domain. Residues 1700–1774 (AYLDEKIRGC…HLVVWFAEKI (75 aa)) form the Carrier domain. Residue serine 1734 is modified to O-(pantetheine 4'-phosphoryl)serine.

It localises to the cytoplasm. It is found in the cytosol. The enzyme catalyses 3 malonyl-CoA + acetyl-CoA + NADPH + 3 H(+) = 6-methylsalicylate + 3 CO2 + NADP(+) + 4 CoA + H2O. Its pathway is mycotoxin biosynthesis; patulin biosynthesis. 6-methylsalicylic acid synthase; part of the gene cluster that mediates the biosynthesis of patulin, an acetate-derived tetraketide mycotoxin produced by several fungal species that shows antimicrobial properties against several bacteria. PatK catalyzes the first step of the pathway which is the synthesis of 6-methylsalicylic acid via condensation of 1 acetate and 3 malonate units. The pathway begins with the synthesis of 6-methylsalicylic acid by the polyketide synthase (PKS) patK via condensation of acetate and malonate units. The 6-methylsalicylic acid decarboxylase patG then catalyzes the decarboxylation of 6-methylsalicylic acid to yield m-cresol (also known as 3-methylphenol). These first reactions occur in the cytosol. The intermediate m-cresol is then transported into the endoplasmic reticulum where the cytochrome P450 monooxygenase patH converts it to m-hydroxybenzyl alcohol, which is further converted to gentisyl alcohol by the cytochrome P450 monooxygenase patI. The oxidoreductases patJ and patO further convert gentisyl alcohol to isoepoxydon in the vacuole. PatN catalyzes then the transformation of isoepoxydon into phyllostine. The cluster protein patF is responsible for the conversion from phyllostine to neopatulin whereas the alcohol dehydrogenase patD converts neopatulin to E-ascladiol. The steps between isoepoxydon and E-ascladiol occur in the cytosol, and E-ascladiol is probably secreted to the extracellular space by one of the cluster-specific transporters patC or patM. Finally, the secreted patulin synthase patE catalyzes the conversion of E-ascladiol to patulin. This chain is 6-methylsalicylic acid synthase, found in Penicillium expansum (Blue mold rot fungus).